The following is a 324-amino-acid chain: Phospho-N-acetylmuramoyl-pentapeptide-transferase (324 aa).

A run of 10 helical transmembrane segments spans residues 9-29 (TFAV…PFLV), 53-73 (TMGA…FSFI), 77-97 (VSAA…LGFL), 117-137 (FLGQ…SDFA), 149-169 (IDLG…FSNA), 176-196 (LDGL…VIAF), 201-221 (MDVA…LLFN), 227-247 (IFMG…VSIL), 253-273 (LLLL…LQVF), and 304-324 (VLTF…VVIF).

The protein belongs to the glycosyltransferase 4 family. MraY subfamily. The cofactor is Mg(2+).

It is found in the cell membrane. The catalysed reaction is UDP-N-acetyl-alpha-D-muramoyl-L-alanyl-gamma-D-glutamyl-meso-2,6-diaminopimeloyl-D-alanyl-D-alanine + di-trans,octa-cis-undecaprenyl phosphate = di-trans,octa-cis-undecaprenyl diphospho-N-acetyl-alpha-D-muramoyl-L-alanyl-D-glutamyl-meso-2,6-diaminopimeloyl-D-alanyl-D-alanine + UMP. Its pathway is cell wall biogenesis; peptidoglycan biosynthesis. In terms of biological role, catalyzes the initial step of the lipid cycle reactions in the biosynthesis of the cell wall peptidoglycan: transfers peptidoglycan precursor phospho-MurNAc-pentapeptide from UDP-MurNAc-pentapeptide onto the lipid carrier undecaprenyl phosphate, yielding undecaprenyl-pyrophosphoryl-MurNAc-pentapeptide, known as lipid I. This Listeria innocua serovar 6a (strain ATCC BAA-680 / CLIP 11262) protein is Phospho-N-acetylmuramoyl-pentapeptide-transferase.